Consider the following 282-residue polypeptide: Phosphatidylserine decarboxylase proenzyme (282 aa).

Active-site charge relay system; for autoendoproteolytic cleavage activity residues include Asp-88, His-144, and Ser-247. Ser-247 functions as the Schiff-base intermediate with substrate; via pyruvic acid; for decarboxylase activity in the catalytic mechanism. Position 247 is a pyruvic acid (Ser); by autocatalysis (Ser-247).

It belongs to the phosphatidylserine decarboxylase family. PSD-B subfamily. Prokaryotic type I sub-subfamily. As to quaternary structure, heterodimer of a large membrane-associated beta subunit and a small pyruvoyl-containing alpha subunit. Pyruvate serves as cofactor. In terms of processing, is synthesized initially as an inactive proenzyme. Formation of the active enzyme involves a self-maturation process in which the active site pyruvoyl group is generated from an internal serine residue via an autocatalytic post-translational modification. Two non-identical subunits are generated from the proenzyme in this reaction, and the pyruvate is formed at the N-terminus of the alpha chain, which is derived from the carboxyl end of the proenzyme. The autoendoproteolytic cleavage occurs by a canonical serine protease mechanism, in which the side chain hydroxyl group of the serine supplies its oxygen atom to form the C-terminus of the beta chain, while the remainder of the serine residue undergoes an oxidative deamination to produce ammonia and the pyruvoyl prosthetic group on the alpha chain. During this reaction, the Ser that is part of the protease active site of the proenzyme becomes the pyruvoyl prosthetic group, which constitutes an essential element of the active site of the mature decarboxylase.

Its subcellular location is the cell membrane. The enzyme catalyses a 1,2-diacyl-sn-glycero-3-phospho-L-serine + H(+) = a 1,2-diacyl-sn-glycero-3-phosphoethanolamine + CO2. It participates in phospholipid metabolism; phosphatidylethanolamine biosynthesis; phosphatidylethanolamine from CDP-diacylglycerol: step 2/2. Its function is as follows. Catalyzes the formation of phosphatidylethanolamine (PtdEtn) from phosphatidylserine (PtdSer). This is Phosphatidylserine decarboxylase proenzyme from Xanthomonas oryzae pv. oryzae (strain KACC10331 / KXO85).